Reading from the N-terminus, the 119-residue chain is Small ribosomal subunit protein uS13 (119 aa).

Over residues 94-113 (GLPVRGQRTKTNARTRKGPR) the composition is skewed to basic residues. Residues 94-119 (GLPVRGQRTKTNARTRKGPRKAIGAK) form a disordered region.

This sequence belongs to the universal ribosomal protein uS13 family. Part of the 30S ribosomal subunit. Forms a loose heterodimer with protein S19. Forms two bridges to the 50S subunit in the 70S ribosome.

In terms of biological role, located at the top of the head of the 30S subunit, it contacts several helices of the 16S rRNA. In the 70S ribosome it contacts the 23S rRNA (bridge B1a) and protein L5 of the 50S subunit (bridge B1b), connecting the 2 subunits; these bridges are implicated in subunit movement. Contacts the tRNAs in the A and P-sites. The sequence is that of Small ribosomal subunit protein uS13 from Nitrosomonas europaea (strain ATCC 19718 / CIP 103999 / KCTC 2705 / NBRC 14298).